The primary structure comprises 92 residues: MNFSGFEFSSIVAFFLLILQLSTAAVLPADYAYGVADEMSALPDSGSLFAEQRPSKRAQTFVRFGKRAQTFVRFGKRGQTFVRFGRSAPFEQ.

Residues 1-24 (MNFSGFEFSSIVAFFLLILQLSTA) form the signal peptide. Positions 25 to 55 (AVLPADYAYGVADEMSALPDSGSLFAEQRPS) are excised as a propeptide. Phenylalanine amide occurs at positions 64, 74, and 84. The propeptide occupies 87–92 (SAPFEQ).

This sequence belongs to the FARP (FMRFamide related peptide) family. In terms of tissue distribution, each flp gene is expressed in a distinct set of neurons.

It is found in the secreted. In terms of biological role, FMRFamides and FMRFamide-like peptides are neuropeptides. AQTFVRF-amide inhibits the activity of dissected pharyngeal myogenic muscle system. The polypeptide is FMRFamide-like neuropeptides 16 (Caenorhabditis elegans).